The sequence spans 217 residues: tRNA (guanine-N(7)-)-methyltransferase (217 aa).

S-adenosyl-L-methionine-binding residues include Glu-45, Glu-70, Asp-97, and Asp-119. Asp-119 is an active-site residue. Position 123 (Lys-123) interacts with substrate. Residues 125-130 (RHEKRR) form an interaction with RNA region. Substrate contacts are provided by residues Asp-155 and 195-198 (TEYE).

Belongs to the class I-like SAM-binding methyltransferase superfamily. TrmB family.

The enzyme catalyses guanosine(46) in tRNA + S-adenosyl-L-methionine = N(7)-methylguanosine(46) in tRNA + S-adenosyl-L-homocysteine. It participates in tRNA modification; N(7)-methylguanine-tRNA biosynthesis. In terms of biological role, catalyzes the formation of N(7)-methylguanine at position 46 (m7G46) in tRNA. In Lactobacillus helveticus (strain DPC 4571), this protein is tRNA (guanine-N(7)-)-methyltransferase.